A 574-amino-acid polypeptide reads, in one-letter code: uncharacterized protein (574 aa).

Residues 297–327 (STASKSKKRRKDEVSGAQRNSSPLPQDAVSS) form a disordered region. Residues 313 to 327 (AQRNSSPLPQDAVSS) show a composition bias toward polar residues.

This is an uncharacterized protein from Macaca fascicularis (Crab-eating macaque).